The primary structure comprises 517 residues: ATP synthase subunit alpha 2 (517 aa).

Position 173–180 (173–180 (GDRQTGKT)) interacts with ATP.

It belongs to the ATPase alpha/beta chains family. As to quaternary structure, F-type ATPases have 2 components, CF(1) - the catalytic core - and CF(0) - the membrane proton channel. CF(1) has five subunits: alpha(3), beta(3), gamma(1), delta(1), epsilon(1). CF(0) has three main subunits: a(1), b(2) and c(9-12). The alpha and beta chains form an alternating ring which encloses part of the gamma chain. CF(1) is attached to CF(0) by a central stalk formed by the gamma and epsilon chains, while a peripheral stalk is formed by the delta and b chains.

It is found in the cell inner membrane. It catalyses the reaction ATP + H2O + 4 H(+)(in) = ADP + phosphate + 5 H(+)(out). Functionally, produces ATP from ADP in the presence of a proton gradient across the membrane. The alpha chain is a regulatory subunit. This chain is ATP synthase subunit alpha 2, found in Legionella pneumophila subsp. pneumophila (strain Philadelphia 1 / ATCC 33152 / DSM 7513).